Here is a 349-residue protein sequence, read N- to C-terminus: Dipeptide transport ATP-binding protein DppD (349 aa).

Positions Leu7–Leu258 constitute an ABC transporter domain. Position 43–50 (Gly43–Ser50) interacts with ATP.

It belongs to the ABC transporter superfamily. The complex is composed of two ATP-binding proteins (DppD and DppF), two transmembrane proteins (DppB and DppC) and a solute-binding protein (DppA).

Its subcellular location is the cell membrane. The enzyme catalyses a dipeptide(out) + ATP + H2O = a dipeptide(in) + ADP + phosphate + H(+). Functionally, part of the ABC transporter DppABCDF involved in dipeptide transport. Responsible for energy coupling to the transport system. This is Dipeptide transport ATP-binding protein DppD from Lactococcus lactis subsp. cremoris (strain MG1363).